Reading from the N-terminus, the 190-residue chain is Tereporin-Ca1 (190 aa).

Residues 2–21 form an N-terminal region region; the sequence is TAGSSLAGTTLSGLAASGYR. Residues Gly78, Ser96, Pro98, Tyr131, and Tyr132 each contribute to the phosphocholine site. Residues 138-140 carry the Cell attachment site, crucial for protein stability motif; that stretch reads KGE.

The protein belongs to the actinoporin family. Conoidea subfamily. Octamer or nonamer in membranes. Monomer in the soluble state. As to expression, expressed by the venom duct.

It is found in the secreted. The protein localises to the nematocyst. Its subcellular location is the target cell membrane. Pore-forming protein that forms pores of around 1 nm and causes cardiac stimulation and cytolysis. The protein is Tereporin-Ca1 of Terebra anilis (Auger snail).